A 306-amino-acid polypeptide reads, in one-letter code: Homoserine kinase (306 aa).

90-100 is an ATP binding site; the sequence is PLARGLGSSAS.

The protein belongs to the GHMP kinase family. Homoserine kinase subfamily.

It localises to the cytoplasm. It catalyses the reaction L-homoserine + ATP = O-phospho-L-homoserine + ADP + H(+). The protein operates within amino-acid biosynthesis; L-threonine biosynthesis; L-threonine from L-aspartate: step 4/5. Its function is as follows. Catalyzes the ATP-dependent phosphorylation of L-homoserine to L-homoserine phosphate. The polypeptide is Homoserine kinase (Staphylococcus epidermidis (strain ATCC 12228 / FDA PCI 1200)).